The following is a 360-amino-acid chain: Decorin (360 aa).

The signal sequence occupies residues 1-16 (MTATLILLLLAQVSWA). The propeptide occupies 17–30 (GPFQQRGLFDFMLE). Residue S34 is glycosylated (O-linked (Xyl...) (glycosaminoglycan) serine). 2 cysteine pairs are disulfide-bonded: C55-C61 and C59-C68. LRR repeat units lie at residues 74 to 94 (DKVPKDLPPDTTLLDLQNNKI), 95 to 118 (TEIKDGDFKNLKNLHALILVNNKI), 119 to 142 (SKISPGAFTPLVKLERLYLSKNHL), 143 to 163 (KELPEKMPKSLQELRAHENEI), 164 to 187 (TKVRKSVFSGMNQMIVIELGTNPL), 188 to 213 (KSSGIENGAFQGMKKLSYIRIADTNI), 214 to 234 (TTIPQGLPPSLTELHLDGNKI), 235 to 258 (TKIDASSLKGLNNLAKLGLSFNDI), 259 to 282 (SAVDNGSLANAPHLRELHLDNNKL), 283 to 305 (IRVPGGLADHKYIQVVYLHNNNI), 306 to 335 (SVVGANDFCPPGYNTKKASYSGVSLFSNPV), and 336 to 360 (QYWEIQPSTFRCVYMRSAIQLGNYK). N-linked (GlcNAc...) asparagine glycosylation occurs at N212. N-linked (GlcNAc...) asparagine glycosylation is found at N263 and N304. The cysteines at positions 314 and 347 are disulfide-linked.

It belongs to the small leucine-rich proteoglycan (SLRP) family. SLRP class I subfamily. In terms of assembly, binds to type I and type II collagen, fibronectin and TGF-beta. Forms a ternary complex with MFAP2 and ELN. Interacts with DPT. Post-translationally, the attached glycosaminoglycan chain can be either chondroitin sulfate or dermatan sulfate depending upon the tissue of origin.

The protein resides in the secreted. It localises to the extracellular space. The protein localises to the extracellular matrix. May affect the rate of fibrils formation. This is Decorin (DCN) from Oryctolagus cuniculus (Rabbit).